The following is a 261-amino-acid chain: Transmembrane protein 106A (261 aa).

Positions 1–10 (MGKAFSQLTS) are enriched in polar residues. The disordered stretch occupies residues 1 to 22 (MGKAFSQLTSQKDEDKSILPDN). A helical transmembrane segment spans residues 93 to 113 (LSVFLAVTICLLIFSLTIFFL).

Belongs to the TMEM106 family.

Its subcellular location is the cell membrane. Activates macrophages and polarizes them into M1-like macrophages through the activation of the MAPK and NF-kappaB signaling pathway. Upon activation, up-regulates the expression of CD80, CD86, CD69 and MHC II on macrophages, and induces the release of pro-inflammatory cytokines such as TNF, IL1B, IL6, CCL2 and nitric oxide. May play a role in inhibition of proliferation and migration. The protein is Transmembrane protein 106A (Tmem106a) of Rattus norvegicus (Rat).